Consider the following 417-residue polypeptide: 4-hydroxy-3-methylbut-2-en-1-yl diphosphate synthase (flavodoxin) (417 aa).

[4Fe-4S] cluster contacts are provided by Cys-304, Cys-307, Cys-350, and Glu-357.

This sequence belongs to the IspG family. [4Fe-4S] cluster is required as a cofactor.

The catalysed reaction is (2E)-4-hydroxy-3-methylbut-2-enyl diphosphate + oxidized [flavodoxin] + H2O + 2 H(+) = 2-C-methyl-D-erythritol 2,4-cyclic diphosphate + reduced [flavodoxin]. The protein operates within isoprenoid biosynthesis; isopentenyl diphosphate biosynthesis via DXP pathway; isopentenyl diphosphate from 1-deoxy-D-xylulose 5-phosphate: step 5/6. In terms of biological role, converts 2C-methyl-D-erythritol 2,4-cyclodiphosphate (ME-2,4cPP) into 1-hydroxy-2-methyl-2-(E)-butenyl 4-diphosphate. This Rhizobium meliloti (strain 1021) (Ensifer meliloti) protein is 4-hydroxy-3-methylbut-2-en-1-yl diphosphate synthase (flavodoxin).